The following is a 549-amino-acid chain: Arginine--tRNA ligase (549 aa).

The 'HIGH' region motif lies at A132 to H142.

It belongs to the class-I aminoacyl-tRNA synthetase family. In terms of assembly, monomer.

Its subcellular location is the cytoplasm. The catalysed reaction is tRNA(Arg) + L-arginine + ATP = L-arginyl-tRNA(Arg) + AMP + diphosphate. The protein is Arginine--tRNA ligase of Renibacterium salmoninarum (strain ATCC 33209 / DSM 20767 / JCM 11484 / NBRC 15589 / NCIMB 2235).